A 108-amino-acid chain; its full sequence is ER membrane protein complex subunit 6 (108 aa).

The next 3 helical transmembrane spans lie at 21-41 (VVSFVRNLTSSFFGCAAGILG), 45-65 (YEGLALYVLGYFFVSFLLFAL), and 86-106 (ILDGAPSYVLTWTLFYSLVYV).

The protein belongs to the EMC6 family.

It is found in the endoplasmic reticulum membrane. The protein is ER membrane protein complex subunit 6 of Schizosaccharomyces pombe (strain 972 / ATCC 24843) (Fission yeast).